Consider the following 310-residue polypeptide: Acetaldehyde dehydrogenase 1 (310 aa).

Serine 12–isoleucine 15 provides a ligand contact to NAD(+). Cysteine 132 (acyl-thioester intermediate) is an active-site residue. NAD(+)-binding positions include serine 163 to asparagine 171 and asparagine 287.

This sequence belongs to the acetaldehyde dehydrogenase family.

It catalyses the reaction acetaldehyde + NAD(+) + CoA = acetyl-CoA + NADH + H(+). The sequence is that of Acetaldehyde dehydrogenase 1 from Pseudomonas putida (strain W619).